A 256-amino-acid polypeptide reads, in one-letter code: Putative bidirectional sugar transporter SWEET7e (256 aa).

Over 1 to 9 the chain is Extracellular; that stretch reads MVSPDLIRN. The chain crosses the membrane as a helical span at residues 10–30; that stretch reads VVGIVGNAISFGLFLSPVLTF. A MtN3/slv 1 domain is found at 10-97; the sequence is VVGIVGNAIS…TIFFLFSNKK (88 aa). The Cytoplasmic portion of the chain corresponds to 31–45; it reads WRIIKEKDMKYFKAD. Residues 46-66 traverse the membrane as a helical segment; that stretch reads PYLATLLNCMLWVFYGLPIVH. Over 67–69 the chain is Extracellular; it reads PNS. The chain crosses the membrane as a helical span at residues 70-90; sequence ILVVTINGIGLVIEAVYLTIF. At 91-100 the chain is on the cytoplasmic side; the sequence is FLFSNKKNKK. Residues 101–121 form a helical membrane-spanning segment; sequence MGVVLATEALFMAAVALGVLL. Over 122–130 the chain is Extracellular; sequence GAHTHQRRS. A helical transmembrane segment spans residues 131 to 151; it reads LIVGILCVIFGTIMYSSPLTI. One can recognise a MtN3/slv 2 domain in the interval 133 to 212; that stretch reads VGILCVIFGT…LMQLILDKNQ (80 aa). The Cytoplasmic segment spans residues 152 to 164; that stretch reads MSQVVKTKSVEYM. Residues 165 to 185 form a helical membrane-spanning segment; sequence PLLLSVVSFLNGLCWTSYALI. Arg-186 is a topological domain (extracellular). The helical transmembrane segment at 187–207 threads the bilayer; it reads FDIFITIPNGLGVLFTLMQLI. The Cytoplasmic segment spans residues 208–256; sequence LDKNQDKNLELPTVAPVAKETSIVTPVSKDDDINGSTASHVIINITKEP.

The protein belongs to the SWEET sugar transporter family. As to quaternary structure, forms homooligomers and/or heterooligomers.

The protein resides in the cell membrane. Its function is as follows. Mediates both low-affinity uptake and efflux of sugar across the plasma membrane. This is Putative bidirectional sugar transporter SWEET7e (SWEET7E) from Oryza sativa subsp. japonica (Rice).